Consider the following 126-residue polypeptide: Small ribosomal subunit protein uS12 (126 aa).

Residues 1-26 are disordered; the sequence is MPTINQLVRKGRASETTKSKSPALQD. At Asp89 the chain carries 3-methylthioaspartic acid. The interval 101-126 is disordered; that stretch reads SLDTQGVKDRKQARSKYGAKRAKAAK. Basic residues predominate over residues 113-126; it reads ARSKYGAKRAKAAK.

The protein belongs to the universal ribosomal protein uS12 family. As to quaternary structure, part of the 30S ribosomal subunit. Contacts proteins S8 and S17. May interact with IF1 in the 30S initiation complex.

Its function is as follows. With S4 and S5 plays an important role in translational accuracy. In terms of biological role, interacts with and stabilizes bases of the 16S rRNA that are involved in tRNA selection in the A site and with the mRNA backbone. Located at the interface of the 30S and 50S subunits, it traverses the body of the 30S subunit contacting proteins on the other side and probably holding the rRNA structure together. The combined cluster of proteins S8, S12 and S17 appears to hold together the shoulder and platform of the 30S subunit. The sequence is that of Small ribosomal subunit protein uS12 from Burkholderia pseudomallei (strain 1106a).